The sequence spans 132 residues: D-ribose pyranase (132 aa).

The active-site Proton donor is H20. Substrate contacts are provided by residues D28, H99, and 121 to 123 (YSN).

The protein belongs to the RbsD / FucU family. RbsD subfamily. As to quaternary structure, homodecamer.

The protein localises to the cytoplasm. The catalysed reaction is beta-D-ribopyranose = beta-D-ribofuranose. The protein operates within carbohydrate metabolism; D-ribose degradation; D-ribose 5-phosphate from beta-D-ribopyranose: step 1/2. Its function is as follows. Catalyzes the interconversion of beta-pyran and beta-furan forms of D-ribose. The protein is D-ribose pyranase of Lactococcus lactis subsp. cremoris (strain SK11).